The following is a 536-amino-acid chain: Major facilitator superfamily domain-containing protein 4B (536 aa).

Transmembrane regions (helical) follow at residues 19-39 (LTYW…GPTI), 53-73 (ITWV…SGGA), 81-101 (ALLA…IIPL), 105-125 (VLLL…IDTI), 140-160 (IFLQ…PLIA), 211-231 (YAFW…FVLM), 297-317 (FFLI…IMGV), 341-361 (LNCI…PLSY), 366-386 (VHLL…LMIL), 391-411 (VFLF…FPCL), 428-448 (VLVT…GTLI), and 456-476 (FLVC…SVIL).

This sequence belongs to the major facilitator superfamily.

The protein resides in the membrane. The chain is Major facilitator superfamily domain-containing protein 4B from Danio rerio (Zebrafish).